We begin with the raw amino-acid sequence, 246 residues long: ATP synthase subunit a, chloroplastic (246 aa).

The next 5 membrane-spanning stretches (helical) occupy residues 35–55 (AQVL…TFLA), 94–114 (IPFI…GALI), 132–152 (DINT…YAGL), 198–218 (LVVA…MMFL), and 219–239 (GLFT…AYIG).

This sequence belongs to the ATPase A chain family. In terms of assembly, F-type ATPases have 2 components, CF(1) - the catalytic core - and CF(0) - the membrane proton channel. CF(1) has five subunits: alpha(3), beta(3), gamma(1), delta(1), epsilon(1). CF(0) has four main subunits: a, b, b' and c.

It localises to the plastid. Its subcellular location is the chloroplast thylakoid membrane. In terms of biological role, key component of the proton channel; it plays a direct role in the translocation of protons across the membrane. This is ATP synthase subunit a, chloroplastic from Chara vulgaris (Common stonewort).